We begin with the raw amino-acid sequence, 472 residues long: Succinate-semialdehyde dehydrogenase [NADP(+)] (472 aa).

NADP(+)-binding positions include 134 to 135, 158 to 161, and 210 to 211; these read WN, KHAS, and GS. E232 acts as the Proton acceptor in catalysis. L233 is a binding site for NADP(+). C266 serves as the catalytic Nucleophile. Residue E363 coordinates NADP(+).

Belongs to the aldehyde dehydrogenase family.

It carries out the reaction succinate semialdehyde + NADP(+) + H2O = succinate + NADPH + 2 H(+). Functionally, catalyzes the NADP(+)-dependent oxidation of succinate semialdehyde to succinate. It is believed to be the main source of succinate semialdehyde dehydrogenase activity in Mycobacterium. In Mycolicibacterium paratuberculosis (strain ATCC BAA-968 / K-10) (Mycobacterium paratuberculosis), this protein is Succinate-semialdehyde dehydrogenase [NADP(+)] (gabD1).